The sequence spans 305 residues: tRNA dimethylallyltransferase (305 aa).

8–15 (GPTASGKT) is an ATP binding site. 10–15 (TASGKT) provides a ligand contact to substrate. Residues 33 to 36 (DSQQ) are interaction with substrate tRNA.

Belongs to the IPP transferase family. As to quaternary structure, monomer. Mg(2+) is required as a cofactor.

It catalyses the reaction adenosine(37) in tRNA + dimethylallyl diphosphate = N(6)-dimethylallyladenosine(37) in tRNA + diphosphate. Catalyzes the transfer of a dimethylallyl group onto the adenine at position 37 in tRNAs that read codons beginning with uridine, leading to the formation of N6-(dimethylallyl)adenosine (i(6)A). This chain is tRNA dimethylallyltransferase, found in Anaeromyxobacter sp. (strain K).